A 173-amino-acid chain; its full sequence is Crossover junction endodeoxyribonuclease RuvC (173 aa).

Catalysis depends on residues Asp8, Glu67, and Asp139. Residues Asp8, Glu67, and Asp139 each coordinate Mg(2+).

The protein belongs to the RuvC family. As to quaternary structure, homodimer which binds Holliday junction (HJ) DNA. The HJ becomes 2-fold symmetrical on binding to RuvC with unstacked arms; it has a different conformation from HJ DNA in complex with RuvA. In the full resolvosome a probable DNA-RuvA(4)-RuvB(12)-RuvC(2) complex forms which resolves the HJ. It depends on Mg(2+) as a cofactor.

The protein resides in the cytoplasm. It carries out the reaction Endonucleolytic cleavage at a junction such as a reciprocal single-stranded crossover between two homologous DNA duplexes (Holliday junction).. Functionally, the RuvA-RuvB-RuvC complex processes Holliday junction (HJ) DNA during genetic recombination and DNA repair. Endonuclease that resolves HJ intermediates. Cleaves cruciform DNA by making single-stranded nicks across the HJ at symmetrical positions within the homologous arms, yielding a 5'-phosphate and a 3'-hydroxyl group; requires a central core of homology in the junction. The consensus cleavage sequence is 5'-(A/T)TT(C/G)-3'. Cleavage occurs on the 3'-side of the TT dinucleotide at the point of strand exchange. HJ branch migration catalyzed by RuvA-RuvB allows RuvC to scan DNA until it finds its consensus sequence, where it cleaves and resolves the cruciform DNA. In Psychromonas ingrahamii (strain DSM 17664 / CCUG 51855 / 37), this protein is Crossover junction endodeoxyribonuclease RuvC.